We begin with the raw amino-acid sequence, 833 residues long: Major vault protein (833 aa).

MVP repeat units lie at residues 10 to 52 (RYYY…VSVP), 54 to 115 (RHYC…RKLQ), 119 to 170 (PNTG…TVIY), 171 to 223 (PNTA…TMLS), 224 to 278 (ELKA…VSLN), 280 to 328 (KEYV…LVVG), 329 to 380 (KEEA…MALD), and 381 to 433 (RNEG…SIKT).

As to quaternary structure, the vault ribonucleoprotein particle is a huge (400 A x 670 A) cage structure of 12.9 MDa. It consists of a dimer of half-vaults, with each half-vault comprising 39 identical major vault protein (MVP) chains, PARP4 and one or more vault RNAs (vRNAs).

Its subcellular location is the cytoplasm. It is found in the nucleus. Functionally, required for normal vault structure. Vaults are multi-subunit structures that may act as scaffolds for proteins involved in signal transduction. Vaults may also play a role in nucleo-cytoplasmic transport. The polypeptide is Major vault protein (Leishmania braziliensis).